Consider the following 408-residue polypeptide: Cobalt-precorrin-5B C(1)-methyltransferase (408 aa).

The protein belongs to the CbiD family.

It catalyses the reaction Co-precorrin-5B + S-adenosyl-L-methionine = Co-precorrin-6A + S-adenosyl-L-homocysteine. It participates in cofactor biosynthesis; adenosylcobalamin biosynthesis; cob(II)yrinate a,c-diamide from sirohydrochlorin (anaerobic route): step 6/10. Functionally, catalyzes the methylation of C-1 in cobalt-precorrin-5B to form cobalt-precorrin-6A. The protein is Cobalt-precorrin-5B C(1)-methyltransferase of Clostridioides difficile (strain 630) (Peptoclostridium difficile).